The primary structure comprises 366 residues: ACP-SH:acetate ligase (366 aa).

Its subcellular location is the cytoplasm. It carries out the reaction holo-[ACP] + acetate + ATP = acetyl-[ACP] + AMP + diphosphate. In terms of biological role, acyl-carrier protein (ACP) acetate ligase of the biotin-dependent malonate decarboxylase multienzyme complex (EC 7.2.4.4). Involved in the conversion of the thiol group of the ACP-bound 2'-(5-phosphoribosyl)-3'-dephospho-CoA prosthetic group into its acetyl thioester using the energy from the hydrolysis of ATP. This is ACP-SH:acetate ligase (madH) from Malonomonas rubra.